Here is a 325-residue protein sequence, read N- to C-terminus: Bifunctional ligase/repressor BirA (325 aa).

A DNA-binding region (H-T-H motif) is located at residues 23–42 (GQKISDALGCSRTAVWKHIE). In terms of domain architecture, BPL/LPL catalytic spans 74 to 262 (RFGLKTEVMG…CFEKRYRDYM (189 aa)). Biotin-binding positions include Gln118, 122 to 124 (RGR), and Lys189.

This sequence belongs to the biotin--protein ligase family.

The enzyme catalyses biotin + L-lysyl-[protein] + ATP = N(6)-biotinyl-L-lysyl-[protein] + AMP + diphosphate + H(+). Its function is as follows. Acts both as a biotin--[acetyl-CoA-carboxylase] ligase and a repressor. The protein is Bifunctional ligase/repressor BirA of Bacillus spizizenii (strain ATCC 23059 / NRRL B-14472 / W23) (Bacillus subtilis subsp. spizizenii).